We begin with the raw amino-acid sequence, 206 residues long: Small ribosomal subunit protein uS4 (206 aa).

Residues 96-156 enclose the S4 RNA-binding domain; sequence GRLDNVVYRM…EKAKKQARIK (61 aa).

Belongs to the universal ribosomal protein uS4 family. Part of the 30S ribosomal subunit. Contacts protein S5. The interaction surface between S4 and S5 is involved in control of translational fidelity.

Its function is as follows. One of the primary rRNA binding proteins, it binds directly to 16S rRNA where it nucleates assembly of the body of the 30S subunit. With S5 and S12 plays an important role in translational accuracy. The chain is Small ribosomal subunit protein uS4 from Aeromonas hydrophila subsp. hydrophila (strain ATCC 7966 / DSM 30187 / BCRC 13018 / CCUG 14551 / JCM 1027 / KCTC 2358 / NCIMB 9240 / NCTC 8049).